A 936-amino-acid chain; its full sequence is MEMPMPPDDQELRNVIDKLAQFVARNGPEFEKMTMEKQKDNPKFSFLFGGEFYSYYKCKLALEQQQLICKQQAPELEPTSAMPPLPQPPLAPTASLTPAQGTPSMDELIQQSQWSLQQQEQHLLALRQEQVTTAVAHAVEQQMQKLLEETQLDMSEFDNLLQPIIDTCTKDAISAGKNWMFSNAKSPPHCELMAGHLRNRITADGAHFELRLHLIYLINDVLHHCQRKQARELLAALQKVVVPIYCTSFLAVEEDKQQKIARLLQLWEKNGYFDDSIIQQLQSPALGLGQYQATLINEYSSVVQPVQLAFQQQIQSLKTQHEEFVSSLAQQQQQQQQQQQQQPQPQPQPQIQLPQMEADVKATPPPPAPPPASAPAPTIPPTTQPDDNKPPIQMPGSSEYDTSAGVQDPAAAGPRGPGPHEQIPPNKPPWFDQPHPVAPWGQQQPPEQPPYPHHQGGPPHCPPWNNSHEGMWGEQRGDPGWNGQRDAPWNNQPDPNWNNQFEGPWNNQHEPPPWGGAQREPPFRMQRPPHFRGPFPPHQQHPQFNQPPHPHNFNRFPPRFMQDDFPPRHPFERPPYPHRFDYPQGDFPADMGPPHHHPGHRMPHPGINEHPPWAGPQHPDFGPPPHGFNGQPPHMRRQGPPHINHDDPSLVPNVPYFDLPAGLMAPLVKLEDHEYKPLDPKDIRLPPPMPPSERLLAAVEAFYSPPSHDRPRNSEGWEQNGLYEFFRAKMRARRRKGQEKRNSGPSRSRSRSKSRGRSSSRSSSRSSKSSRSSSRSHSRSRSRSSSRSRSRSRSRSRSSRSRSRSRSRSRSKSYSPGRRRRSRSRSPTPPSAAGLGSNSAPPIPDSRLGEENKGHQMLVKMGWSGSGGLGAKEQGIQDPIKGGDVRDKWDQYKGVGVALDDPYENYRRNKSYSFIARMKARDEFSTFGTRKEEKED.

The residue at position 1 (M1) is an N-acetylmethionine. The SURP motif repeat unit spans residues 15 to 57 (VIDKLAQFVARNGPEFEKMTMEKQKDNPKFSFLFGGEFYSYYK). An N6-acetyllysine modification is found at K18. The segment at 77 to 102 (EPTSAMPPLPQPPLAPTASLTPAQGT) is disordered. The segment covering 81–91 (AMPPLPQPPLA) has biased composition (pro residues). The CID domain maps to 149–289 (ETQLDMSEFD…QLQSPALGLG (141 aa)). The tract at residues 328–646 (LAQQQQQQQQ…RQGPPHINHD (319 aa)) is disordered. The segment covering 330–355 (QQQQQQQQQQQQQPQPQPQPQIQLPQ) has biased composition (low complexity). The span at 363-383 (TPPPPAPPPASAPAPTIPPTT) shows a compositional bias: pro residues. The span at 395–405 (PGSSEYDTSAG) shows a compositional bias: polar residues. Positions 488-500 (PWNNQPDPNWNNQ) are enriched in low complexity. Residues 534 to 550 (PFPPHQQHPQFNQPPHP) are compositionally biased toward pro residues. Low complexity predominate over residues 551 to 560 (HNFNRFPPRF). Residues 561–572 (MQDDFPPRHPFE) show a composition bias toward basic and acidic residues. The segment covering 594 to 603 (PHHHPGHRMP) has biased composition (basic residues). Y723 is modified (phosphotyrosine). The segment at 731 to 887 (RARRRKGQEK…DPIKGGDVRD (157 aa)) is disordered. Basic residues predominate over residues 748 to 758 (SRSRSKSRGRS). Low complexity predominate over residues 759 to 773 (SSRSSSRSSKSSRSS). The span at 774-824 (SRSHSRSRSRSSSRSRSRSRSRSRSSRSRSRSRSRSRSKSYSPGRRRRSRS) shows a compositional bias: basic residues. Phosphoserine occurs at positions 822, 824, and 826. At T828 the chain carries Phosphothreonine. S837 carries the phosphoserine modification. Residues 850 to 900 (EENKGHQMLVKMGWSGSGGLGAKEQGIQDPIKGGDVRDKWDQYKGVGVALD) enclose the G-patch domain. A Glycyl lysine isopeptide (Lys-Gly) (interchain with G-Cter in SUMO2) cross-link involves residue K853. Phosphoserine is present on residues S864 and S866. K881 is covalently cross-linked (Glycyl lysine isopeptide (Lys-Gly) (interchain with G-Cter in SUMO2)). N6-acetyllysine is present on K888. At S913 the chain carries Phosphoserine.

The protein resides in the cytoplasm. The protein localises to the perinuclear region. Its subcellular location is the endoplasmic reticulum. In terms of biological role, involved in calcium homeostasis, growth and proliferation. The sequence is that of Calcium homeostasis endoplasmic reticulum protein from Mus musculus (Mouse).